The chain runs to 521 residues: Na(+)/H(+) antiporter ApNhaP (521 aa).

The Periplasmic segment spans residues 1–18 (MTIEAAMGEEAIKENLEQ). Residues 19–39 (FLIVLSVSLGVATLSQISSFF) traverse the membrane as a helical segment. Residues 40–41 (RQ) lie on the Cytoplasmic side of the membrane. A helical membrane pass occupies residues 42–62 (IPYTLLLVIVGLGLAFVDIRL). At 63 to 94 (VNLSPELILEIFLPPLLFEAAWNIRWRNLKKN) the chain is on the periplasmic side. A helical membrane pass occupies residues 95–115 (LFPVVLLAIIGVVISVVGIGF). At 116–126 (SLNYFSGLSLP) the chain is on the cytoplasmic side. The helical transmembrane segment at 127–147 (IALLVGAILAATDPVSVIALF) threads the bilayer. At 148–164 (RELGVGERLTVLMEGES) the chain is on the periplasmic side. A helical transmembrane segment spans residues 165–185 (LFNDGVAVVAFSLLVGIPLGT). Topologically, residues 186 to 194 (QEFSVTNTL) are cytoplasmic. The helical transmembrane segment at 195-215 (IQFVTLQGIGIGCGGVIGFGI) threads the bilayer. The Periplasmic segment spans residues 216 to 245 (SYLTQRFDLPLVEQSLTLVSAYGTYLITEE). Residues 246 to 266 (LGGSGVIGVVTVGLILGNFGS) traverse the membrane as a helical segment. Over 267 to 276 (RIGMNPRTRL) the chain is Cytoplasmic. A helical membrane pass occupies residues 277–297 (LVSEFWEFIAFFVNSIVFLLI). The Periplasmic segment spans residues 298-311 (GDQINIRGLADNGQ). The helical transmembrane segment at 312 to 332 (LILITIIALVIIRAISIYGLG) threads the bilayer. Over 333–349 (TISNLITKQDISWQEET) the chain is Cytoplasmic. The chain crosses the membrane as a helical span at residues 350–370 (VLWWGGLRGSVSIALALSVPV). The Periplasmic segment spans residues 371-380 (MLDGRQDIIE). A helical membrane pass occupies residues 381 to 401 (AVFGVVLFTLLVQGLTMQTVI). Residues 402-521 (EKLGLIGDRA…LLQEVLAKPE (120 aa)) lie on the Cytoplasmic side of the membrane.

This sequence belongs to the monovalent cation:proton antiporter 1 (CPA1) transporter (TC 2.A.36) family.

The protein localises to the cell inner membrane. Functionally, na(+)/H(+) antiporter that extrudes sodium in exchange for external protons. Also shows high Ca(2+)/H(+) antiporter activity at alkaline pH. Does not catalyze exchange between Li(+) and H(+). The protein is Na(+)/H(+) antiporter ApNhaP (apnhaP) of Aphanothece halophytica.